Here is a 274-residue protein sequence, read N- to C-terminus: Dermonecrotic toxin LspiSicTox-betaIII2 (274 aa).

His5 is an active-site residue. Glu25 and Asp27 together coordinate Mg(2+). The Nucleophile role is filled by His41. Intrachain disulfides connect Cys45–Cys51 and Cys47–Cys189. Residue Asp85 participates in Mg(2+) binding.

It belongs to the arthropod phospholipase D family. Class II subfamily. The cofactor is Mg(2+). As to expression, expressed by the venom gland.

It is found in the secreted. It catalyses the reaction an N-(acyl)-sphingosylphosphocholine = an N-(acyl)-sphingosyl-1,3-cyclic phosphate + choline. The catalysed reaction is an N-(acyl)-sphingosylphosphoethanolamine = an N-(acyl)-sphingosyl-1,3-cyclic phosphate + ethanolamine. It carries out the reaction a 1-acyl-sn-glycero-3-phosphocholine = a 1-acyl-sn-glycero-2,3-cyclic phosphate + choline. The enzyme catalyses a 1-acyl-sn-glycero-3-phosphoethanolamine = a 1-acyl-sn-glycero-2,3-cyclic phosphate + ethanolamine. In terms of biological role, dermonecrotic toxins cleave the phosphodiester linkage between the phosphate and headgroup of certain phospholipids (sphingolipid and lysolipid substrates), forming an alcohol (often choline) and a cyclic phosphate. This toxin acts on sphingomyelin (SM). It may also act on ceramide phosphoethanolamine (CPE), lysophosphatidylcholine (LPC) and lysophosphatidylethanolamine (LPE), but not on lysophosphatidylserine (LPS), and lysophosphatidylglycerol (LPG). It acts by transphosphatidylation, releasing exclusively cyclic phosphate products as second products. Induces dermonecrosis, hemolysis, increased vascular permeability, edema, inflammatory response, and platelet aggregation. In Loxosceles spinulosa (Recluse spider), this protein is Dermonecrotic toxin LspiSicTox-betaIII2.